The sequence spans 347 residues: Putative histone PARylation factor 1-like (347 aa).

Position 1 is an N-acetylmethionine (methionine 1). N6-acetyllysine occurs at positions 187 and 234.

This sequence belongs to the HPF1 family.

The sequence is that of Putative histone PARylation factor 1-like from Homo sapiens (Human).